Reading from the N-terminus, the 445-residue chain is Canavalin (445 aa).

The N-terminal stretch at 1-26 is a signal peptide; sequence MAFSARFPLWLLLGVVLLASVSASFA. Cupin type-1 domains lie at 49-207 and 249-407; these read YLFR…DEIE and FNLR…EEVE.

Belongs to the 7S seed storage protein family. As to quaternary structure, homotrimer.

In terms of biological role, seed storage protein. The polypeptide is Canavalin (Canavalia gladiata (Sword bean)).